We begin with the raw amino-acid sequence, 57 residues long: Small ribosomal subunit protein bS21 (57 aa).

Residues 32–42 show a composition bias toward basic and acidic residues; it reads VRRREHYEKPS. The segment at 32 to 57 is disordered; the sequence is VRRREHYEKPSQRRKRKLEASRRRRR. The span at 43-57 shows a compositional bias: basic residues; sequence QRRKRKLEASRRRRR.

It belongs to the bacterial ribosomal protein bS21 family.

This is Small ribosomal subunit protein bS21 from Synechococcus elongatus (strain ATCC 33912 / PCC 7942 / FACHB-805) (Anacystis nidulans R2).